A 458-amino-acid chain; its full sequence is PH domain-containing protein DDB_G0274775 (458 aa).

The 98-residue stretch at 15–112 (PSDREGWLTK…WMESIKRNLD (98 aa)) folds into the PH domain. A disordered region spans residues 111-154 (LDGEGGMKSGGNDIVSSPKINSEPTPKVNQNGSAPEKSSLSSPR). The segment covering 124-142 (IVSSPKINSEPTPKVNQNG) has biased composition (polar residues). Residues 143–154 (SAPEKSSLSSPR) are compositionally biased toward low complexity.

This chain is PH domain-containing protein DDB_G0274775, found in Dictyostelium discoideum (Social amoeba).